The chain runs to 657 residues: Probable alpha-galactosidase D (657 aa).

A signal peptide spans Met1–Gly16. Residues Asn47 and Asn91 are each glycosylated (N-linked (GlcNAc...) asparagine). Residues Cys124 and Cys157 are joined by a disulfide bond. The active-site Nucleophile is the Asp155. 2 N-linked (GlcNAc...) asparagine glycosylation sites follow: Asn182 and Asn191. Residue Glu200–Asp204 coordinates substrate. Asp222 functions as the Proton donor in the catalytic mechanism. N-linked (GlcNAc...) asparagine glycans are attached at residues Asn291, Asn438, Asn460, Asn505, Asn539, Asn543, and Asn582.

It belongs to the glycosyl hydrolase 27 family.

The protein resides in the secreted. It carries out the reaction Hydrolysis of terminal, non-reducing alpha-D-galactose residues in alpha-D-galactosides, including galactose oligosaccharides, galactomannans and galactolipids.. Functionally, hydrolyzes a variety of simple alpha-D-galactoside as well as more complex molecules such as oligosaccharides and polysaccharides. The protein is Probable alpha-galactosidase D (aglD) of Aspergillus oryzae (strain ATCC 42149 / RIB 40) (Yellow koji mold).